A 591-amino-acid chain; its full sequence is Glutathione hydrolase (591 aa).

Positions 1-41 (MASKWIEEQPLVHRRDIRISSKSRIAAGLLVLLVLWRYGLP) are cleaved as a signal peptide. Arg122 provides a ligand contact to L-glutamate. 3 N-linked (GlcNAc...) asparagine glycosylation sites follow: Asn135, Asn270, and Asn389. The active-site Nucleophile is Thr393. L-glutamate-binding positions include Thr411, Glu432, and 464-465 (SA). Residue Asn534 is glycosylated (N-linked (GlcNAc...) asparagine).

The protein belongs to the gamma-glutamyltransferase family.

The catalysed reaction is an N-terminal (5-L-glutamyl)-[peptide] + an alpha-amino acid = 5-L-glutamyl amino acid + an N-terminal L-alpha-aminoacyl-[peptide]. It catalyses the reaction glutathione + H2O = L-cysteinylglycine + L-glutamate. The enzyme catalyses an S-substituted glutathione + H2O = an S-substituted L-cysteinylglycine + L-glutamate. The protein operates within mycotoxin biosynthesis. Functionally, gamma-glutamyltransferase; part of the gene cluster that mediates the biosynthesis of the secondary metabolite ustiloxin B, an antimitotic tetrapeptide. First, ustA is processed by the subtilisin-like endoprotease Kex2 that is outside the ustiloxin B gene cluster, at the C-terminal side of Arg-Lys, after transfer to Golgi apparatus through the endoplasmic reticulum (ER). Cleavage by KEX2 generates 16 peptides YAIG-I to YAIG-XVI. To process the precursor peptide further, at least two peptidases are necessary to cleave the N-terminal and C-terminal sides of the Tyr-Ala-Ile-Gly core peptide which serves as backbone for the synthesis of ustiloxin B, through cyclization and modification of the tyrosine with a non-protein coding amino acid, norvaline. One of the two peptidases must be the serine peptidase ustP; and the other pepdidase is probably ustH. Macrocyclization of the core peptide derived from ustA requires the tyrosinase ustQ, as well as the homologous oxidases ustYa and ustYb, and leads to the production of the first cyclization product N-desmethylustiloxin F. For the formation of N-desmethylustiloxin F, three oxidation steps are required, hydroxylation at the benzylic position, hydroxylation at either the aromatic ring of Tyr or beta-position of Ile, and oxidative cyclization. UstQ may catalyze the oxidation of a phenol moiety, whereas the ustYa and ustYb are most likely responsible for the remaining two-step oxidations. N-desmethylustiloxin F is then methylated by ustM to yield ustiloxin F which in turn substrate of the cytochrome P450 monooxygenase ustC which catalyzes the formation of S-deoxyustiloxin H. The flavoprotein monooxygenases ustF1 and ustF2 then participate in the modification of the side chain of S-deoxyustiloxin H, leading to the synthesis of an oxime intermediate, via ustiloxin H. Finally, carboxylative dehydration performed by the cysteine desulfurase-like protein ustD yields ustiloxin B. The chain is Glutathione hydrolase from Aspergillus flavus (strain ATCC 200026 / FGSC A1120 / IAM 13836 / NRRL 3357 / JCM 12722 / SRRC 167).